Reading from the N-terminus, the 471-residue chain is MENFKHLPEPFRIRVIEPVKRTTRAYREEAIIKSGMNPFLLDSEDVFIDLLTDSGTGAVTQSMQAAMMRGDEAYSGSRSYYALAESVKNIFGYQYTIPTHQGRGAEQIYIPVLIKKREQEKGLDRSKMVAFSNYFFDTTQGHSQINGCTVRNVYIKEAFDTGVRYDFKGNFDLEGLERGIEEVGPNNVPYIVATITSNSAGGQPVSLANLKAMYSIAKKYDIPVVMDSARFAENAYFIKQREAEYKDWTIEQITRETYKYADMLAMSAKKDAMVPMGGLLCVKDDSLFDVYTECRTLCVVQEGFPTYGGLEGGAMERLAVGLYDGMNLDWLAYRIAQVQYLVDGLEEIGVVCQQAGGHAAFVDAGKLLPHIPADQFPAQALACELYKVAGIRAVEIGSFLLGRDPKTGKQLPCPAELLRLTIPRATYTQTHMDFIIEAFKHVKENAANIKGLTFTYEPKVLRHFTAKLKEV.

Lysine 5, lysine 115, and lysine 156 each carry N6-acetyllysine. At lysine 270 the chain carries N6-(pyridoxal phosphate)lysine. N6-acetyllysine is present on lysine 450.

This sequence belongs to the beta-eliminating lyase family. In terms of assembly, homotetramer. The cofactor is pyridoxal 5'-phosphate.

The enzyme catalyses L-tryptophan + H2O = indole + pyruvate + NH4(+). It participates in amino-acid degradation; L-tryptophan degradation via pyruvate pathway; indole and pyruvate from L-tryptophan: step 1/1. In Escherichia fergusonii (strain ATCC 35469 / DSM 13698 / CCUG 18766 / IAM 14443 / JCM 21226 / LMG 7866 / NBRC 102419 / NCTC 12128 / CDC 0568-73), this protein is Tryptophanase.